The chain runs to 124 residues: Small ribosomal subunit protein eS6 (124 aa).

It belongs to the eukaryotic ribosomal protein eS6 family.

The polypeptide is Small ribosomal subunit protein eS6 (Thermoplasma acidophilum (strain ATCC 25905 / DSM 1728 / JCM 9062 / NBRC 15155 / AMRC-C165)).